We begin with the raw amino-acid sequence, 140 residues long: Oocyte-expressed protein homolog (140 aa).

Positions 40–101 (PLVFFLEAWL…AVQRQVKSVL (62 aa)) constitute a KH; atypical domain.

It belongs to the KHDC1 family. Component of the subcortical maternal complex (SCMC), at least composed of NLRP5, KHDC3, OOEP, and TLE6. Within the complex, interacts with NLRP5, KHDC3 and TLE6. As part of the SCMC interacts with the SCMC-associated protein NLRP4F. The SCMC may facilitate translocation of its components between the nuclear and cytoplasmic compartments. Forms a scaffold complex with KHDC3/FILIA, and interacts with BLM and TRIM25 at DNA replication forks.

It is found in the cytoplasm. The protein resides in the nucleus. Its function is as follows. Component of the subcortical maternal complex (SCMC), a multiprotein complex that plays a key role in early embryonic development. The SCMC complex is a structural constituent of cytoplasmic lattices, which consist in fibrous structures found in the cytoplasm of oocytes and preimplantation embryos. They are required to store maternal proteins critical for embryonic development, such as proteins that control epigenetic reprogramming of the preimplantation embryo, and prevent their degradation or activation. As part of the OOEP-KHDC3 scaffold, recruits BLM and TRIM25 to DNA replication forks, thereby promoting the ubiquitination of BLM by TRIM25, enhancing BLM retainment at replication forks and therefore promoting stalled replication fork restart. Positively regulates the homologous recombination-mediated DNA double-strand break (DSB) repair pathway by regulating ATM activation and RAD51 recruitment to DSBs in oocytes. Thereby contributes to oocyte survival and the resumption and completion of meiosis. In Bos taurus (Bovine), this protein is Oocyte-expressed protein homolog (OOEP).